We begin with the raw amino-acid sequence, 201 residues long: Glutathione S-transferase GstA (201 aa).

The region spanning 1-81 (MKLFYKPGAC…YLADSVPDRQ (81 aa)) is the GST N-terminal domain. Glutathione-binding positions include Cys10, Lys35, Val52, 65-66 (EG), Asn99, and 103-106 (TELH). One can recognise a GST C-terminal domain in the interval 87–201 (NSISRYKTIE…QDALSAEGLK (115 aa)).

It belongs to the GST superfamily. Beta family. Homodimer.

It localises to the cytoplasm. The catalysed reaction is RX + glutathione = an S-substituted glutathione + a halide anion + H(+). Conjugation of reduced glutathione to a wide number of exogenous and endogenous hydrophobic electrophiles. The chain is Glutathione S-transferase GstA (gstA) from Escherichia coli O157:H7.